Consider the following 503-residue polypeptide: MEEFQGYLELDISRQHDLLYALLFREYIYALAHDHGLNRSILFENAGYDNKSSSIIVKRLITRMYQPNRLIFSSKDSIQNPFFGHNKNLYSQIISEGFAVIVEIPFSLRLVFSLERKEMAKSHNLRSIHSIFPFLEDKFIHLDYVLDVLIPYYIHLEILVQPLRYWVKDASSLHLLRFFLHEYCNSLITPKKHITFFSKGNPRLFLFLYNSHICEYEYIFLFLRNQSSHLRSTSSGIFFERIYFYVKIZHFFKVFFDNNFQCILWFFKDPFMHYVRYQGXFFLASKDTSLQMNKWKYYLVNFWQYHFYAWFQPGRININQLVKYSLDFLGYRSNARLNSSLVRSQMLENLFLINNAMNKFETIVPIISLIGSLYKANFCNTFGHPISKPTRTDSSDSDIIDRFLRICRNLSHYHSGSSKKKSLYQVKYILRLSCVKTLARKHKRTVRTFVKRLGSEFLQEFLTEEEVVLSLIFPRTYSTSRRLYRGHIWYLDITSIKHLXNYE.

This sequence belongs to the intron maturase 2 family. MatK subfamily.

The protein resides in the plastid. Its subcellular location is the chloroplast. Its function is as follows. Usually encoded in the trnK tRNA gene intron. Probably assists in splicing its own and other chloroplast group II introns. This is Maturase K from Actinodium cunninghamii (Albany daisy).